A 547-amino-acid chain; its full sequence is Chaperonin GroEL (547 aa).

ATP-binding positions include 30-33 (TLGP), lysine 51, 87-91 (DGTTT), glycine 415, 479-481 (NAA), and aspartate 495. The segment at 524-547 (APKKDEPTPPAAGGGMGGMGGMDF) is disordered. Gly residues predominate over residues 535-547 (AGGGMGGMGGMDF).

Belongs to the chaperonin (HSP60) family. As to quaternary structure, forms a cylinder of 14 subunits composed of two heptameric rings stacked back-to-back. Interacts with the co-chaperonin GroES.

Its subcellular location is the cytoplasm. The enzyme catalyses ATP + H2O + a folded polypeptide = ADP + phosphate + an unfolded polypeptide.. Together with its co-chaperonin GroES, plays an essential role in assisting protein folding. The GroEL-GroES system forms a nano-cage that allows encapsulation of the non-native substrate proteins and provides a physical environment optimized to promote and accelerate protein folding. The sequence is that of Chaperonin GroEL from Xylella fastidiosa (strain 9a5c).